The chain runs to 520 residues: Succinyl-CoA:3-ketoacid coenzyme A transferase 2A, mitochondrial (520 aa).

A mitochondrion-targeting transit peptide spans 1–39; that stretch reads MAALRLLAWALPRGVSALRPPPALPHRLIRRYVSDRSGS. The segment at 280–299 is disordered; it reads ERLTTRDSKPAPGSKDNDPS. E342 functions as the 5-glutamyl coenzyme A thioester intermediate in the catalytic mechanism.

This sequence belongs to the 3-oxoacid CoA-transferase family. As to quaternary structure, homodimer.

It is found in the mitochondrion. It catalyses the reaction a 3-oxo acid + succinyl-CoA = a 3-oxoacyl-CoA + succinate. The protein operates within ketone metabolism; succinyl-CoA degradation; acetoacetyl-CoA from succinyl-CoA: step 1/1. Key enzyme for ketone body catabolism. Transfers the CoA moiety from succinate to acetoacetate. Formation of the enzyme-CoA intermediate proceeds via an unstable anhydride species formed between the carboxylate groups of the enzyme and substrate. Probably play and important roles in the energy metabolism of spermatozoa. The chain is Succinyl-CoA:3-ketoacid coenzyme A transferase 2A, mitochondrial (Oxct2a) from Mus musculus (Mouse).